The sequence spans 356 residues: Cdc42 effector protein 4 (356 aa).

Lys5 is modified (N6-methyllysine). The residue at position 18 (Ser18) is a Phosphoserine. The region spanning 27-41 (ISAPLGDFRHTMHVG) is the CRIB domain. Residues 51-102 (SFLNSKAGEPDGESLDEQPSSSSSKRSLLSRKFRGSKRSQSVTRGEREQRDM) form a disordered region. At Ser64 the chain carries Phosphoserine. The span at 78-87 (LLSRKFRGSK) shows a compositional bias: basic residues. 3 positions are modified to phosphoserine: Ser105, Ser109, and Ser118. 2 disordered regions span residues 122 to 182 (LNEK…LDEQ) and 257 to 356 (VAAP…EIRV). A compositionally biased stretch (basic and acidic residues) spans 123-132 (NEKEAAEKGT). Residues 133–143 (SKLPKSLSSSP) show a composition bias toward low complexity. 6 positions are modified to phosphoserine: Ser138, Ser140, Ser142, Ser174, Ser292, and Ser295. The span at 287–315 (AAAAPSPGSARSMGSHTTRDSSSLSSCTS) shows a compositional bias: low complexity. Positions 318–344 (LEERSPAFRGPDRARAAVSRQPDKEFS) are enriched in basic and acidic residues. A compositionally biased stretch (acidic residues) spans 345–356 (FMDEEEEDEIRV).

The protein belongs to the BORG/CEP family. Interacts with CDC42 and RHOQ, in a GTP-dependent manner. Not detected in any of the adult tissues tested. May be expressed only in fetal or embryonic tissues.

The protein resides in the endomembrane system. It is found in the cytoplasm. It localises to the cytoskeleton. In terms of biological role, probably involved in the organization of the actin cytoskeleton. May act downstream of CDC42 to induce actin filament assembly leading to cell shape changes. Induces pseudopodia formation, when overexpressed in fibroblasts. This chain is Cdc42 effector protein 4 (CDC42EP4), found in Homo sapiens (Human).